Here is a 244-residue protein sequence, read N- to C-terminus: 5-oxoprolinase subunit A (244 aa).

This sequence belongs to the LamB/PxpA family. In terms of assembly, forms a complex composed of PxpA, PxpB and PxpC.

It carries out the reaction 5-oxo-L-proline + ATP + 2 H2O = L-glutamate + ADP + phosphate + H(+). Functionally, catalyzes the cleavage of 5-oxoproline to form L-glutamate coupled to the hydrolysis of ATP to ADP and inorganic phosphate. The polypeptide is 5-oxoprolinase subunit A (Salmonella schwarzengrund (strain CVM19633)).